Consider the following 230-residue polypeptide: 3-beta-hydroxysteroid-Delta(8),Delta(7)-isomerase (230 aa).

N-acetylthreonine is present on Thr-2. The next 4 helical transmembrane spans lie at 29–49, 66–86, 121–141, and 185–205; these read WHIL…TWLL, LCWF…FSFY, MESV…IAFL, and FWFY…ILVF. In terms of domain architecture, EXPERA spans 61-204; the sequence is GRRLALCWFA…IWLVIPGILV (144 aa).

Belongs to the EBP family. As to expression, expressed in liver.

The protein localises to the endoplasmic reticulum membrane. The protein resides in the nucleus envelope. Its subcellular location is the cytoplasmic vesicle. It carries out the reaction lathosterol = 5alpha-cholest-8-en-3beta-ol. The enzyme catalyses zymosterol = 5alpha-cholesta-7,24-dien-3beta-ol. The catalysed reaction is 5,6alpha-epoxy-5alpha-cholestan-3beta-ol + H2O = 5alpha-cholestane-3beta,5,6beta-triol. It catalyses the reaction 5,6beta-epoxy-5beta-cholestan-3beta-ol + H2O = 5alpha-cholestane-3beta,5,6beta-triol. Its pathway is steroid biosynthesis; cholesterol biosynthesis. Enzymatic activity is induced by 25-hydroxycholesterol, cholestyramine and lovastatin. Isomerase that catalyzes the conversion of Delta(8)-sterols to their corresponding Delta(7)-isomers. In terms of biological role, component of the microsomal antiestrogen binding site (AEBS), a multiproteic complex at the ER membrane that consists of an association between EBP and 7-dehydrocholesterol reductase/DHCR7. This complex is responsible for cholesterol-5,6-epoxide hydrolase (ChEH) activity, which consists in the hydration of cholesterol-5,6-epoxides (5,6-EC) into cholestane-3beta,5alpha,6beta-triol (CT). The precise role of each component of this complex has not been described yet. The polypeptide is 3-beta-hydroxysteroid-Delta(8),Delta(7)-isomerase (Rattus norvegicus (Rat)).